The following is an 82-amino-acid chain: MIIYPSIDKLLEKVPSRYSLAVLAAKRAHELESGDLKMLSDYKSDKSVGKALEEIAAGDVIIDPKSKMLERDAEKLDRKDQE.

It belongs to the RNA polymerase subunit omega family. As to quaternary structure, the RNAP catalytic core consists of 2 alpha, 1 beta, 1 beta' and 1 omega subunit. When a sigma factor is associated with the core the holoenzyme is formed, which can initiate transcription.

It catalyses the reaction RNA(n) + a ribonucleoside 5'-triphosphate = RNA(n+1) + diphosphate. In terms of biological role, promotes RNA polymerase assembly. Latches the N- and C-terminal regions of the beta' subunit thereby facilitating its interaction with the beta and alpha subunits. This Lacticaseibacillus casei (strain BL23) (Lactobacillus casei) protein is DNA-directed RNA polymerase subunit omega.